We begin with the raw amino-acid sequence, 696 residues long: Elongation factor G (696 aa).

The region spanning 8 to 288 (EDYRNFGIMA…AVVDFLPSPI (281 aa)) is the tr-type G domain. GTP is bound by residues 17 to 24 (AHIDAGKT), 86 to 90 (DTPGH), and 140 to 143 (NKMD).

It belongs to the TRAFAC class translation factor GTPase superfamily. Classic translation factor GTPase family. EF-G/EF-2 subfamily.

It localises to the cytoplasm. In terms of biological role, catalyzes the GTP-dependent ribosomal translocation step during translation elongation. During this step, the ribosome changes from the pre-translocational (PRE) to the post-translocational (POST) state as the newly formed A-site-bound peptidyl-tRNA and P-site-bound deacylated tRNA move to the P and E sites, respectively. Catalyzes the coordinated movement of the two tRNA molecules, the mRNA and conformational changes in the ribosome. The sequence is that of Elongation factor G from Chelativorans sp. (strain BNC1).